Consider the following 407-residue polypeptide: Venom metalloproteinase 3 (407 aa).

N-linked (GlcNAc...) asparagine glycosylation is found at asparagine 42, asparagine 91, asparagine 126, and asparagine 166. Residues 191–405 enclose the Peptidase M12B domain; it reads FYPKLLVLVD…TSAACLKDTY (215 aa). Intrachain disulfides connect cysteine 317–cysteine 400 and cysteine 356–cysteine 384. Histidine 340 is a binding site for Zn(2+). The active site involves glutamate 341. The Zn(2+) site is built by histidine 344 and histidine 350. Asparagine 391 is a glycosylation site (N-linked (GlcNAc...) asparagine).

This sequence in the C-terminal section; belongs to the venom metalloproteinase (M12B) family. Monomer. Zn(2+) is required as a cofactor. In terms of tissue distribution, expressed by the venom gland.

The protein localises to the secreted. The gelatinase activity is inhibited by EDTA. In terms of biological role, the recombinant protein has gelatinase activity. In vivo, injection of this recombinant into fifth instar L.oleracea (host) larvae results in partial insect mortality associated with the molt to sixth instar, with surviving insects showing retarded development and growth. The chain is Venom metalloproteinase 3 from Eulophus pennicornis (Parasitoid wasp).